Reading from the N-terminus, the 212-residue chain is Pyrrolidone-carboxylate peptidase (212 aa).

Catalysis depends on residues Glu-78, Cys-141, and His-165.

This sequence belongs to the peptidase C15 family. As to quaternary structure, homotetramer.

The protein resides in the cytoplasm. It catalyses the reaction Release of an N-terminal pyroglutamyl group from a polypeptide, the second amino acid generally not being Pro.. Removes 5-oxoproline from various penultimate amino acid residues except L-proline. This Staphylococcus aureus protein is Pyrrolidone-carboxylate peptidase (pcp).